Reading from the N-terminus, the 292-residue chain is 33 kDa chaperonin (292 aa).

Disulfide bonds link Cys237–Cys239 and Cys270–Cys273.

Belongs to the HSP33 family. Under oxidizing conditions two disulfide bonds are formed involving the reactive cysteines. Under reducing conditions zinc is bound to the reactive cysteines and the protein is inactive.

The protein resides in the cytoplasm. Redox regulated molecular chaperone. Protects both thermally unfolding and oxidatively damaged proteins from irreversible aggregation. Plays an important role in the bacterial defense system toward oxidative stress. The chain is 33 kDa chaperonin from Lachnoclostridium phytofermentans (strain ATCC 700394 / DSM 18823 / ISDg) (Clostridium phytofermentans).